We begin with the raw amino-acid sequence, 505 residues long: Trans-cinnamate 4-monooxygenase (505 aa).

A helical transmembrane segment spans residues 3–23; it reads LLLLEKTLLGSFVAVLVAILV. (E)-cinnamate-binding positions include 213–218 and Ala-306; that span reads RSRLAQ. Residue Cys-447 participates in heme binding.

Belongs to the cytochrome P450 family. It depends on heme as a cofactor.

It is found in the membrane. The enzyme catalyses (E)-cinnamate + reduced [NADPH--hemoprotein reductase] + O2 = (E)-4-coumarate + oxidized [NADPH--hemoprotein reductase] + H2O + H(+). The protein operates within phenylpropanoid metabolism; trans-4-coumarate biosynthesis; trans-4-coumarate from trans-cinnamate: step 1/1. In terms of biological role, catalyzes the first oxidative step of the phenylpropanoid pathway in higher plants by transforming trans-cinnamate into p-coumarate. The compounds formed by this pathway are essential components for lignification, pollination, and defense against ultraviolet light, predators and pathogens. The protein is Trans-cinnamate 4-monooxygenase (CYP73A16) of Populus kitakamiensis (Aspen).